A 396-amino-acid polypeptide reads, in one-letter code: Phosphoglycerate kinase (396 aa).

Substrate contacts are provided by residues 21–23 (DFN), Arg-36, 59–62 (HLGK), Arg-119, and Arg-156. Residues Lys-206, Glu-325, and 352–355 (GGDS) contribute to the ATP site.

Belongs to the phosphoglycerate kinase family. In terms of assembly, monomer.

It is found in the cytoplasm. The enzyme catalyses (2R)-3-phosphoglycerate + ATP = (2R)-3-phospho-glyceroyl phosphate + ADP. It participates in carbohydrate degradation; glycolysis; pyruvate from D-glyceraldehyde 3-phosphate: step 2/5. This is Phosphoglycerate kinase from Staphylococcus haemolyticus (strain JCSC1435).